The chain runs to 350 residues: ATPase GET3 (350 aa).

26-33 (KGGVGKTT) serves as a coordination point for ATP. Asp57 is a catalytic residue. ATP contacts are provided by Glu243 and Asn270. Zn(2+) contacts are provided by Cys282 and Cys285.

Belongs to the arsA ATPase family. As to quaternary structure, homodimer. Component of the Golgi to ER traffic (GET) complex, which is composed of GET1, GET2 and GET3. Within the complex, GET1 and GET2 form a heterotetramer which is stabilized by phosphatidylinositol binding and which binds to the GET3 homodimer. Interacts with the chloride channel protein GEF1.

It is found in the cytoplasm. The protein resides in the endoplasmic reticulum. Its subcellular location is the golgi apparatus. ATPase required for the post-translational delivery of tail-anchored (TA) proteins to the endoplasmic reticulum. Recognizes and selectively binds the transmembrane domain of TA proteins in the cytosol. This complex then targets to the endoplasmic reticulum by membrane-bound receptors GET1 and GET2, where the tail-anchored protein is released for insertion. This process is regulated by ATP binding and hydrolysis. ATP binding drives the homodimer towards the closed dimer state, facilitating recognition of newly synthesized TA membrane proteins. ATP hydrolysis is required for insertion. Subsequently, the homodimer reverts towards the open dimer state, lowering its affinity for the GET1-GET2 receptor, and returning it to the cytosol to initiate a new round of targeting. Cooperates with the HDEL receptor ERD2 to mediate the ATP-dependent retrieval of resident ER proteins that contain a C-terminal H-D-E-L retention signal from the Golgi to the ER. Involved in low-level resistance to the oxyanions arsenite and arsenate, and in heat tolerance. The protein is ATPase GET3 of Candida dubliniensis (strain CD36 / ATCC MYA-646 / CBS 7987 / NCPF 3949 / NRRL Y-17841) (Yeast).